The primary structure comprises 277 residues: Probable endonuclease 4 (277 aa).

Zn(2+) contacts are provided by histidine 70, histidine 108, glutamate 143, aspartate 176, histidine 179, histidine 210, aspartate 223, histidine 225, and glutamate 255.

It belongs to the AP endonuclease 2 family. The cofactor is Zn(2+).

The enzyme catalyses Endonucleolytic cleavage to 5'-phosphooligonucleotide end-products.. Functionally, endonuclease IV plays a role in DNA repair. It cleaves phosphodiester bonds at apurinic or apyrimidinic (AP) sites, generating a 3'-hydroxyl group and a 5'-terminal sugar phosphate. The polypeptide is Probable endonuclease 4 (Mycoplasmopsis synoviae (strain 53) (Mycoplasma synoviae)).